Consider the following 279-residue polypeptide: Shikimate dehydrogenase (NADP(+)) (279 aa).

Shikimate contacts are provided by residues 16–18 (SRS) and Thr63. Lys67 acts as the Proton acceptor in catalysis. Residues Asn88 and Asp103 each contribute to the shikimate site. NADP(+) contacts are provided by residues 128–132 (GAGGA) and Met219. Tyr221 is a shikimate binding site. Position 243 (Gly243) interacts with NADP(+).

The protein belongs to the shikimate dehydrogenase family. Homodimer.

The catalysed reaction is shikimate + NADP(+) = 3-dehydroshikimate + NADPH + H(+). The protein operates within metabolic intermediate biosynthesis; chorismate biosynthesis; chorismate from D-erythrose 4-phosphate and phosphoenolpyruvate: step 4/7. Involved in the biosynthesis of the chorismate, which leads to the biosynthesis of aromatic amino acids. Catalyzes the reversible NADPH linked reduction of 3-dehydroshikimate (DHSA) to yield shikimate (SA). In Aromatoleum aromaticum (strain DSM 19018 / LMG 30748 / EbN1) (Azoarcus sp. (strain EbN1)), this protein is Shikimate dehydrogenase (NADP(+)).